Reading from the N-terminus, the 371-residue chain is Probable beta-1,4-xylosyltransferase GT43A (371 aa).

Over methionine 1–histidine 19 the chain is Cytoplasmic. Residues leucine 20–proline 42 form a helical; Signal-anchor for type II membrane protein membrane-spanning segment. Topologically, residues serine 43 to arginine 371 are lumenal. N-linked (GlcNAc...) asparagine glycosylation is found at asparagine 176 and asparagine 299.

This sequence belongs to the glycosyltransferase 43 family.

The protein localises to the golgi apparatus membrane. Its function is as follows. Probable beta-1,4-xylosyltransferase involved in xylan biosynthesis in cell walls. This chain is Probable beta-1,4-xylosyltransferase GT43A, found in Oryza sativa subsp. japonica (Rice).